Reading from the N-terminus, the 160-residue chain is Zinc finger A20 and AN1 domain-containing stress-associated protein 5 (160 aa).

The A20-type zinc-finger motif lies at 20 to 54 (TTTTTLCTNNCGVTANPATNNMCQKCFNASLVSAA). 12 residues coordinate Zn(2+): Cys-26, Cys-30, Cys-42, Cys-45, Cys-101, Cys-104, Cys-115, Cys-117, Cys-122, His-125, His-131, and Cys-133. The segment at 95–141 (QQIVNRCSGCRKKVGLTGFRCRCGELFCSEHRYSDRHDCSYDYKTAG) adopts an AN1-type zinc-finger fold.

Its function is as follows. May be involved in environmental stress response. In Arabidopsis thaliana (Mouse-ear cress), this protein is Zinc finger A20 and AN1 domain-containing stress-associated protein 5 (SAP5).